The primary structure comprises 196 residues: Peptidyl-tRNA hydrolase (196 aa).

Tyr-18 contributes to the tRNA binding site. The active-site Proton acceptor is His-23. 3 residues coordinate tRNA: Phe-69, Asn-71, and Asn-117.

This sequence belongs to the PTH family. As to quaternary structure, monomer.

The protein resides in the cytoplasm. The catalysed reaction is an N-acyl-L-alpha-aminoacyl-tRNA + H2O = an N-acyl-L-amino acid + a tRNA + H(+). In terms of biological role, hydrolyzes ribosome-free peptidyl-tRNAs (with 1 or more amino acids incorporated), which drop off the ribosome during protein synthesis, or as a result of ribosome stalling. Its function is as follows. Catalyzes the release of premature peptidyl moieties from peptidyl-tRNA molecules trapped in stalled 50S ribosomal subunits, and thus maintains levels of free tRNAs and 50S ribosomes. The sequence is that of Peptidyl-tRNA hydrolase from Vibrio parahaemolyticus serotype O3:K6 (strain RIMD 2210633).